We begin with the raw amino-acid sequence, 278 residues long: 3-methyl-2-oxobutanoate hydroxymethyltransferase (278 aa).

The Mg(2+) site is built by Asp44 and Asp83. Residues 44-45, Asp83, and Lys112 contribute to the 3-methyl-2-oxobutanoate site; that span reads DS. Position 114 (Glu114) interacts with Mg(2+). The Proton acceptor role is filled by Glu181.

The protein belongs to the PanB family. In terms of assembly, homodecamer; pentamer of dimers. Requires Mg(2+) as cofactor.

The protein resides in the cytoplasm. It carries out the reaction 3-methyl-2-oxobutanoate + (6R)-5,10-methylene-5,6,7,8-tetrahydrofolate + H2O = 2-dehydropantoate + (6S)-5,6,7,8-tetrahydrofolate. The protein operates within cofactor biosynthesis; (R)-pantothenate biosynthesis; (R)-pantoate from 3-methyl-2-oxobutanoate: step 1/2. Its function is as follows. Catalyzes the reversible reaction in which hydroxymethyl group from 5,10-methylenetetrahydrofolate is transferred onto alpha-ketoisovalerate to form ketopantoate. The polypeptide is 3-methyl-2-oxobutanoate hydroxymethyltransferase (Roseiflexus sp. (strain RS-1)).